Reading from the N-terminus, the 147-residue chain is Large ribosomal subunit protein uL11 (147 aa).

The protein belongs to the universal ribosomal protein uL11 family. As to quaternary structure, part of the ribosomal stalk of the 50S ribosomal subunit. Interacts with L10 and the large rRNA to form the base of the stalk. L10 forms an elongated spine to which L12 dimers bind in a sequential fashion forming a multimeric L10(L12)X complex. In terms of processing, one or more lysine residues are methylated.

In terms of biological role, forms part of the ribosomal stalk which helps the ribosome interact with GTP-bound translation factors. In Thermus thermophilus (strain ATCC BAA-163 / DSM 7039 / HB27), this protein is Large ribosomal subunit protein uL11.